The chain runs to 209 residues: Ribosomal RNA large subunit methyltransferase E (209 aa).

Residues Gly63, Trp65, Asp83, Asp99, and Asp124 each contribute to the S-adenosyl-L-methionine site. Lys164 functions as the Proton acceptor in the catalytic mechanism.

It belongs to the class I-like SAM-binding methyltransferase superfamily. RNA methyltransferase RlmE family.

The protein resides in the cytoplasm. The enzyme catalyses uridine(2552) in 23S rRNA + S-adenosyl-L-methionine = 2'-O-methyluridine(2552) in 23S rRNA + S-adenosyl-L-homocysteine + H(+). Its function is as follows. Specifically methylates the uridine in position 2552 of 23S rRNA at the 2'-O position of the ribose in the fully assembled 50S ribosomal subunit. This Serratia proteamaculans (strain 568) protein is Ribosomal RNA large subunit methyltransferase E.